A 174-amino-acid polypeptide reads, in one-letter code: Gamma-crystallin C (174 aa).

Beta/gamma crystallin 'Greek key' domains follow at residues 2 to 40 and 41 to 83; these read GKIT…RVDS and GCWM…CLIP. At cysteine 23 the chain carries S-methylcysteine. Residues 84–87 are connecting peptide; sequence QTSS. 2 Beta/gamma crystallin 'Greek key' domains span residues 88 to 128 and 129 to 171; these read HRLR…HVLE and GCWV…RRVV.

This sequence belongs to the beta/gamma-crystallin family. In terms of assembly, monomer.

Crystallins are the dominant structural components of the vertebrate eye lens. The chain is Gamma-crystallin C (CRYGC) from Canis lupus familiaris (Dog).